The chain runs to 639 residues: 1,4-alpha-glucan branching enzyme GlgB (639 aa).

The Nucleophile role is filled by D313. The active-site Proton donor is the E366.

The protein belongs to the glycosyl hydrolase 13 family. GlgB subfamily. Monomer.

The catalysed reaction is Transfers a segment of a (1-&gt;4)-alpha-D-glucan chain to a primary hydroxy group in a similar glucan chain.. The protein operates within glycan biosynthesis; glycogen biosynthesis. Functionally, catalyzes the formation of the alpha-1,6-glucosidic linkages in glycogen by scission of a 1,4-alpha-linked oligosaccharide from growing alpha-1,4-glucan chains and the subsequent attachment of the oligosaccharide to the alpha-1,6 position. The chain is 1,4-alpha-glucan branching enzyme GlgB (glgB) from Butyrivibrio fibrisolvens.